Reading from the N-terminus, the 155-residue chain is SsrA-binding protein (155 aa).

This sequence belongs to the SmpB family.

The protein localises to the cytoplasm. Required for rescue of stalled ribosomes mediated by trans-translation. Binds to transfer-messenger RNA (tmRNA), required for stable association of tmRNA with ribosomes. tmRNA and SmpB together mimic tRNA shape, replacing the anticodon stem-loop with SmpB. tmRNA is encoded by the ssrA gene; the 2 termini fold to resemble tRNA(Ala) and it encodes a 'tag peptide', a short internal open reading frame. During trans-translation Ala-aminoacylated tmRNA acts like a tRNA, entering the A-site of stalled ribosomes, displacing the stalled mRNA. The ribosome then switches to translate the ORF on the tmRNA; the nascent peptide is terminated with the 'tag peptide' encoded by the tmRNA and targeted for degradation. The ribosome is freed to recommence translation, which seems to be the essential function of trans-translation. The sequence is that of SsrA-binding protein from Streptococcus pneumoniae (strain Hungary19A-6).